The primary structure comprises 793 residues: Ferredoxin/F(420)H(2)-dependent CoB-CoM heterodisulfide reductase subunit A (793 aa).

An FAD-binding site is contributed by 147–170 (GGGVAGIEAALNLAEAGFPVTMVE). 4Fe-4S ferredoxin-type domains follow at residues 233-264 (RKPRFVLEDKCKGCVDLCSGVCPVEIENPMNY), 282-311 (QVVLIDPDHCVGCGLCQLACPAEAVDYEQK), 571-600 (MGAHVDPDKCIGCRTCVEVCKFGKISIENK), and 601-629 (KAVVDEVSCYGCGDCSAACPVGAIQMRNF). Positions 243, 246, 250, 254, 291, 294, 297, 301, 580, 583, 586, 590, 609, 612, 615, and 619 each coordinate [4Fe-4S] cluster.

Belongs to the HdrA family. In terms of assembly, the ferredoxin/F(420)H(2)-dependent CoB-CoM heterodisulfide reductase is composed of three subunits; HdrA2, HdrB2 and HdrC2. [4Fe-4S] cluster serves as cofactor. The cofactor is [2Fe-2S] cluster. FAD is required as a cofactor.

Its subcellular location is the cytoplasm. It carries out the reaction coenzyme B + coenzyme M + 2 oxidized [2Fe-2S]-[ferredoxin] = coenzyme M-coenzyme B heterodisulfide + 2 reduced [2Fe-2S]-[ferredoxin] + 2 H(+). The enzyme catalyses coenzyme B + 2 oxidized coenzyme F420-(gamma-L-Glu)(n) + coenzyme M + 2 reduced [2Fe-2S]-[ferredoxin] + 4 H(+) = coenzyme M-coenzyme B heterodisulfide + 2 reduced coenzyme F420-(gamma-L-Glu)(n) + 2 oxidized [2Fe-2S]-[ferredoxin]. It functions in the pathway cofactor metabolism; coenzyme M-coenzyme B heterodisulfide reduction; coenzyme B and coenzyme M from coenzyme M-coenzyme B heterodisulfide: step 1/1. Functionally, part of a complex that catalyzes the reversible reduction of CoM-S-S-CoB to the thiol-coenzymes H-S-CoM (coenzyme M) and H-S-CoB (coenzyme B). Catalyzes the transfer of electrons from ferredoxin to CoM-S-S-CoB during methanogenesis from acetate. Electrons transfer from ferredoxin to CoM-S-S-CoB via HdrA2, HdrC2 and HdrB2. In addition, the complex can use electron bifurcation to direct electron pairs from reduced coenzyme F420 towards the reduction of both ferredoxin and CoB-CoM heterodisulfide. This activity may take place during Fe(III)-dependent anaerobic methane oxidation. The protein is Ferredoxin/F(420)H(2)-dependent CoB-CoM heterodisulfide reductase subunit A of Methanosarcina acetivorans (strain ATCC 35395 / DSM 2834 / JCM 12185 / C2A).